Consider the following 368-residue polypeptide: Germination protease (368 aa).

A propeptide spanning residues 1–16 is cleaved from the precursor; sequence MEKKKLDLSQYAVRTD.

It belongs to the peptidase A25 family. As to quaternary structure, homotetramer. Post-translationally, autoproteolytically processed. The inactive tetrameric zymogen termed p46 autoprocesses to a smaller form termed p41, which is active only during spore germination.

It catalyses the reaction Endopeptidase action with P4 Glu or Asp, P1 preferably Glu &gt; Asp, P1' hydrophobic and P2' Ala.. Functionally, initiates the rapid degradation of small, acid-soluble proteins during spore germination. This chain is Germination protease, found in Bacillus licheniformis (strain ATCC 14580 / DSM 13 / JCM 2505 / CCUG 7422 / NBRC 12200 / NCIMB 9375 / NCTC 10341 / NRRL NRS-1264 / Gibson 46).